Reading from the N-terminus, the 251-residue chain is Triosephosphate isomerase (251 aa).

12–14 is a substrate binding site; sequence NWK. Catalysis depends on histidine 99, which acts as the Electrophile. The Proton acceptor role is filled by glutamate 169. Residues glycine 175, serine 214, and 235 to 236 each bind substrate; that span reads GG.

It belongs to the triosephosphate isomerase family. As to quaternary structure, homodimer.

The protein resides in the cytoplasm. It carries out the reaction D-glyceraldehyde 3-phosphate = dihydroxyacetone phosphate. It participates in carbohydrate biosynthesis; gluconeogenesis. The protein operates within carbohydrate degradation; glycolysis; D-glyceraldehyde 3-phosphate from glycerone phosphate: step 1/1. In terms of biological role, involved in the gluconeogenesis. Catalyzes stereospecifically the conversion of dihydroxyacetone phosphate (DHAP) to D-glyceraldehyde-3-phosphate (G3P). This is Triosephosphate isomerase from Bradyrhizobium sp. (strain ORS 278).